The chain runs to 205 residues: Non-specific lipid transfer protein GPI-anchored 21 (205 aa).

Residues 1-27 (MNSNSFLISAALIFSLLSSNSPTSILA) form the signal peptide. 4 disulfide bridges follow: Cys33–Cys75, Cys44–Cys59, Cys60–Cys100, and Cys73–Cys109. The N-linked (GlcNAc...) asparagine glycan is linked to Asn89. The disordered stretch occupies residues 116–182 (LPTPGPASFG…FAPPPPSSSP (67 aa)). The span at 126–156 (PTTSPTDSQTSDPEGSASFRPPTSPTTSQTP) shows a compositional bias: low complexity. Ser179 carries GPI-anchor amidated serine lipidation. Positions 180–205 (SSPSSSHSLKLSYLLFAFAFTIIKFI) are cleaved as a propeptide — removed in mature form.

The protein belongs to the plant LTP family.

It localises to the cell membrane. Functionally, probable lipid transfer protein. This Arabidopsis thaliana (Mouse-ear cress) protein is Non-specific lipid transfer protein GPI-anchored 21.